Reading from the N-terminus, the 200-residue chain is NADH-quinone oxidoreductase subunit C (200 aa).

Belongs to the complex I 30 kDa subunit family. As to quaternary structure, NDH-1 is composed of 14 different subunits. Subunits NuoB, C, D, E, F, and G constitute the peripheral sector of the complex.

It is found in the cell inner membrane. It catalyses the reaction a quinone + NADH + 5 H(+)(in) = a quinol + NAD(+) + 4 H(+)(out). In terms of biological role, NDH-1 shuttles electrons from NADH, via FMN and iron-sulfur (Fe-S) centers, to quinones in the respiratory chain. The immediate electron acceptor for the enzyme in this species is believed to be ubiquinone. Couples the redox reaction to proton translocation (for every two electrons transferred, four hydrogen ions are translocated across the cytoplasmic membrane), and thus conserves the redox energy in a proton gradient. This chain is NADH-quinone oxidoreductase subunit C, found in Agrobacterium fabrum (strain C58 / ATCC 33970) (Agrobacterium tumefaciens (strain C58)).